The following is a 310-amino-acid chain: Olfactory receptor 1496 (310 aa).

At 1–23 the chain is on the extracellular side; it reads MNNQTFITQFLLLGLPIPEEHQH. Asn3 is a glycosylation site (N-linked (GlcNAc...) asparagine). Residues 24–48 traverse the membrane as a helical segment; the sequence is LFYALFLVMYLTTILGNLLIIVLVQ. The Cytoplasmic segment spans residues 49-55; sequence LDSQLHT. A helical transmembrane segment spans residues 56–77; the sequence is PMYLFLSNLSFSDLCFSSVTMP. The Extracellular portion of the chain corresponds to 78-98; sequence KLLQNMRSQDTSIPYGGCLAQ. Cys95 and Cys187 form a disulfide bridge. Residues 99–118 form a helical membrane-spanning segment; that stretch reads TYFFMVFGDMESFLLVAMAY. Residues 119–137 are Cytoplasmic-facing; that stretch reads DRYVAICFPLHYTSIMSPK. The chain crosses the membrane as a helical span at residues 138-156; the sequence is LCTCLVLLLWMLTTSHAMM. At 157 to 194 the chain is on the extracellular side; that stretch reads HTLLAARLSFCENNVVLNFFCDLFVLLKLACSDTYINE. Residues 195-217 form a helical membrane-spanning segment; it reads LMIFIMSTLLIIIPFFLIVMSYA. Residues 218–234 are Cytoplasmic-facing; sequence RIISSILKVPSTQGICK. The helical transmembrane segment at 235–258 threads the bilayer; the sequence is VFSTCGSHLSVVSLFYGTIIGLYL. The Extracellular segment spans residues 259–270; it reads CPAGNNSTVKEM. The helical transmembrane segment at 271–290 threads the bilayer; that stretch reads VMAMMYTVVTPMLNPFIYSL. Over 291–310 the chain is Cytoplasmic; the sequence is RNRDMKRALIRVICSMKITL.

The protein belongs to the G-protein coupled receptor 1 family. Olfactory epithelium.

The protein localises to the cell membrane. Functionally, odorant receptor. This Rattus norvegicus (Rat) protein is Olfactory receptor 1496 (Olr1496).